A 258-amino-acid chain; its full sequence is Calcium release-activated calcium channel protein 1 (258 aa).

Residues 1–63 are Cytoplasmic-facing; the sequence is MYPECGVETK…SRAKLKASSR (63 aa). A helical membrane pass occupies residues 64 to 81; sequence TSALLSGFAMVAMVEVQL. The Extracellular segment spans residues 82 to 91; it reads EPNHAYPPGL. Residues 92 to 112 traverse the membrane as a helical segment; that stretch reads LIAFSACTTVLVAVHLFALMV. The Cytoplasmic portion of the chain corresponds to 113 to 145; that stretch reads STCILPNIEAVSNVHNLNSVKESPHERMHHHIE. A helical transmembrane segment spans residues 146-166; it reads LAWAFSTVIGTLLFLAEVVLL. The Extracellular portion of the chain corresponds to 167 to 192; the sequence is CWVKFLPVNSPKISSNETSAVSSGQA. N-linked (GlcNAc...) asparagine glycosylation occurs at Asn182. A helical transmembrane segment spans residues 193 to 213; the sequence is AAITSTAIMVPFGLVFIVFAV. The Cytoplasmic portion of the chain corresponds to 214–258; that stretch reads HFYRSLVSHKTDRQFQELNELAELAQLQDQLDHRGDPVQSPVHYA.

It belongs to the Orai family.

It localises to the cell membrane. In terms of biological role, ca(2+) release-activated Ca(2+) (CRAC) channel subunit which mediates Ca(2+) influx following depletion of intracellular Ca(2+) stores. The chain is Calcium release-activated calcium channel protein 1 (orai1) from Xenopus laevis (African clawed frog).